The chain runs to 88 residues: Small ribosomal subunit protein bS20 (88 aa).

This sequence belongs to the bacterial ribosomal protein bS20 family.

Functionally, binds directly to 16S ribosomal RNA. This chain is Small ribosomal subunit protein bS20, found in Clostridium acetobutylicum (strain ATCC 824 / DSM 792 / JCM 1419 / IAM 19013 / LMG 5710 / NBRC 13948 / NRRL B-527 / VKM B-1787 / 2291 / W).